The following is an 806-amino-acid chain: Glycerol-3-phosphate acyltransferase (806 aa).

Residues 305–310 (CHRSHM) carry the HXXXXD motif motif.

Belongs to the GPAT/DAPAT family.

It localises to the cell inner membrane. It catalyses the reaction sn-glycerol 3-phosphate + an acyl-CoA = a 1-acyl-sn-glycero-3-phosphate + CoA. It participates in phospholipid metabolism; CDP-diacylglycerol biosynthesis; CDP-diacylglycerol from sn-glycerol 3-phosphate: step 1/3. In Salmonella paratyphi A (strain ATCC 9150 / SARB42), this protein is Glycerol-3-phosphate acyltransferase.